The sequence spans 508 residues: MGLPWYRVHTVVLNDPGRLLSVHIMHTALVSGWAGSMALYELAVFDPSDPVLDPMWRQGMFVIPFMTRLGITNSWGGWSISGGSITNPGIWSYEGVAGAHIVFSGLCFLAAIWHWVYWDLEIFCDERTGKPSLDLPKIFGIHLFLSGLACFGFGAFHVTGLYGPGIWVSDPYGLTGKVQSINPAWGVEGFDPFVPGGIASHHIAAGTLGILAGLFHLSVRPPQRLYKGLRMGNIETVLSSSIAAVFFAAFVVAGTMWYGSATTPIELFGPTRYQWDQGYFQQEIYRRVGVGLAENLSLSEAWSKIPEKLAFYDYIGNNPAKGGLFRAGSMDNGDGIAVGWLGHPIFRDKEGRELFVRRMPTFFETFPVVLVDVDGIVRADVPFRRAESKYSVEQVGVTVEFYGGELNGVSYSDPTTVKKYARRAQLGEIFELDRATLKSDGVFRSSPRGWFTFGHASFALLFFFGHIWHGARTLFRDVFAGIDPDLDAQVEFGAFQKIGDPTTRRQAV.

A run of 6 helical transmembrane segments spans residues 21–36, 101–115, 140–156, 203–218, 237–252, and 457–472; these read SVHI…WAGS, IVFS…IWHW, GIHL…FGAF, IAAG…FHLS, VLSS…AFVV, and SFAL…HGAR.

It belongs to the PsbB/PsbC family. PsbB subfamily. As to quaternary structure, PSII is composed of 1 copy each of membrane proteins PsbA, PsbB, PsbC, PsbD, PsbE, PsbF, PsbH, PsbI, PsbJ, PsbK, PsbL, PsbM, PsbT, PsbX, PsbY, PsbZ, Psb30/Ycf12, at least 3 peripheral proteins of the oxygen-evolving complex and a large number of cofactors. It forms dimeric complexes. Binds multiple chlorophylls. PSII binds additional chlorophylls, carotenoids and specific lipids. is required as a cofactor.

The protein localises to the plastid. Its subcellular location is the chloroplast thylakoid membrane. Its function is as follows. One of the components of the core complex of photosystem II (PSII). It binds chlorophyll and helps catalyze the primary light-induced photochemical processes of PSII. PSII is a light-driven water:plastoquinone oxidoreductase, using light energy to abstract electrons from H(2)O, generating O(2) and a proton gradient subsequently used for ATP formation. This chain is Photosystem II CP47 reaction center protein, found in Dioscorea elephantipes (Elephant's foot yam).